The following is a 597-amino-acid chain: Elongation factor 4 (597 aa).

A tr-type G domain is found at 2–184; sequence KNIRNFSIIA…EIVAKIPAPT (183 aa). GTP is bound by residues 14 to 19 and 131 to 134; these read DHGKST and NKID.

This sequence belongs to the TRAFAC class translation factor GTPase superfamily. Classic translation factor GTPase family. LepA subfamily.

Its subcellular location is the cell inner membrane. The enzyme catalyses GTP + H2O = GDP + phosphate + H(+). Required for accurate and efficient protein synthesis under certain stress conditions. May act as a fidelity factor of the translation reaction, by catalyzing a one-codon backward translocation of tRNAs on improperly translocated ribosomes. Back-translocation proceeds from a post-translocation (POST) complex to a pre-translocation (PRE) complex, thus giving elongation factor G a second chance to translocate the tRNAs correctly. Binds to ribosomes in a GTP-dependent manner. This chain is Elongation factor 4, found in Neisseria meningitidis serogroup B (strain ATCC BAA-335 / MC58).